A 243-amino-acid chain; its full sequence is UMP-CMP kinase 2 (243 aa).

69–74 (GSGKGT) contacts ATP. The interval 89–118 (SAGDLLRSEISTGREKGELILNIIKEGKIV) is NMP. Residues Arg-95, 116–118 (KIV), and 143–146 (GFPR) each bind a ribonucleoside 5'-phosphate. Residue Asn-150 coordinates CMP. The interval 181–189 (GRNQGRVDD) is LID. Arg-182 contributes to the ATP binding site. Residues Arg-186 and Arg-197 each coordinate a ribonucleoside 5'-phosphate.

This sequence belongs to the adenylate kinase family. UMP-CMP kinase subfamily. In terms of assembly, monomer. It depends on Mg(2+) as a cofactor.

It is found in the cytoplasm. Its subcellular location is the nucleus. The catalysed reaction is UMP + ATP = UDP + ADP. It catalyses the reaction CMP + ATP = CDP + ADP. The enzyme catalyses dCMP + ATP = dCDP + ADP. Functionally, catalyzes the phosphorylation of pyrimidine nucleoside monophosphates at the expense of ATP. Plays an important role in de novo pyrimidine nucleotide biosynthesis. Has preference for UMP and CMP as phosphate acceptors. The polypeptide is UMP-CMP kinase 2 (Oryza sativa subsp. japonica (Rice)).